The chain runs to 640 residues: Threonine--tRNA ligase (640 aa).

Residues 1 to 60 (MKITFPDGAVKEFEPGVSTADIAASISPGLKKKALAGKLNGELLDLVTPIHEDGAIEIVT) enclose the TGS domain. Residues 241–538 (DHRKLGKELE…LIEEYKGAFP (298 aa)) form a catalytic region. Zn(2+) contacts are provided by cysteine 334, histidine 385, and histidine 515.

It belongs to the class-II aminoacyl-tRNA synthetase family. In terms of assembly, homodimer. Requires Zn(2+) as cofactor.

The protein resides in the cytoplasm. The catalysed reaction is tRNA(Thr) + L-threonine + ATP = L-threonyl-tRNA(Thr) + AMP + diphosphate + H(+). In terms of biological role, catalyzes the attachment of threonine to tRNA(Thr) in a two-step reaction: L-threonine is first activated by ATP to form Thr-AMP and then transferred to the acceptor end of tRNA(Thr). Also edits incorrectly charged L-seryl-tRNA(Thr). This is Threonine--tRNA ligase from Listeria welshimeri serovar 6b (strain ATCC 35897 / DSM 20650 / CCUG 15529 / CIP 8149 / NCTC 11857 / SLCC 5334 / V8).